A 127-amino-acid chain; its full sequence is uncharacterized protein (127 aa).

Residues 12-32 (FFFLILFYFCIISSFLFLFIF) traverse the membrane as a helical segment.

It localises to the membrane. This is an uncharacterized protein from Saccharomyces cerevisiae (strain ATCC 204508 / S288c) (Baker's yeast).